The chain runs to 300 residues: Cation-efflux pump FieF (300 aa).

A helical transmembrane segment spans residues Leu24–Val44. Asp45 and Asp49 together coordinate Zn(2+). Helical transmembrane passes span Ala82–Ile102 and Ala114–Phe134. The Zn(2+) site is built by His153 and Asp157. 2 consecutive transmembrane segments (helical) span residues Ser156–His176 and Ala178–Gly198.

It belongs to the cation diffusion facilitator (CDF) transporter (TC 2.A.4) family. FieF subfamily. Homodimer.

Its subcellular location is the cell inner membrane. It catalyses the reaction Zn(2+)(in) + H(+)(out) = Zn(2+)(out) + H(+)(in). It carries out the reaction Cd(2+)(in) + H(+)(out) = Cd(2+)(out) + H(+)(in). The catalysed reaction is Fe(2+)(in) + H(+)(out) = Fe(2+)(out) + H(+)(in). Functionally, divalent metal cation transporter which exports Zn(2+), Cd(2+) and possibly Fe(2+). May be involved in zinc and iron detoxification by efflux. The polypeptide is Cation-efflux pump FieF (Klebsiella pneumoniae subsp. pneumoniae (strain ATCC 700721 / MGH 78578)).